Reading from the N-terminus, the 206-residue chain is Protein-methionine-sulfoxide reductase heme-binding subunit MsrQ (206 aa).

4 helical membrane passes run 8 to 28 (IVWLKVLLHLAGLLPFLWLVW), 82 to 102 (LWCFAWATLHLTSYALLELGI), 116 to 136 (PYLTLGIISWFILFALTLTST), and 153 to 173 (FVYLVAILAPIHYLWSVKILS).

The protein belongs to the MsrQ family. Heterodimer of a catalytic subunit (MsrP) and a heme-binding subunit (MsrQ). It depends on FMN as a cofactor. Requires heme b as cofactor.

Its subcellular location is the cell inner membrane. Part of the MsrPQ system that repairs oxidized periplasmic proteins containing methionine sulfoxide residues (Met-O), using respiratory chain electrons. Thus protects these proteins from oxidative-stress damage caused by reactive species of oxygen and chlorine generated by the host defense mechanisms. MsrPQ is essential for the maintenance of envelope integrity under bleach stress, rescuing a wide series of structurally unrelated periplasmic proteins from methionine oxidation. MsrQ provides electrons for reduction to the reductase catalytic subunit MsrP, using the quinone pool of the respiratory chain. This is Protein-methionine-sulfoxide reductase heme-binding subunit MsrQ from Citrobacter koseri (strain ATCC BAA-895 / CDC 4225-83 / SGSC4696).